The following is a 666-amino-acid chain: Probable potassium transport system protein Kup (666 aa).

12 helical membrane-spanning segments follow: residues 16 to 36 (GFIIALGIVYGDIGTSPLYTM), 58 to 78 (ISLIIWTLTLITTIKYVLVAL), 99 to 119 (TPWLIVPAVIGGATLLSDGAL), 141 to 161 (IFQNQSNVIFATLFILLLLFA), 167 to 187 (TGVIGKLFGPIMFIWFAFLGI), 221 to 241 (IFILGSIFLATTGAEALYSDL), 253 to 273 (WPFVKVAIILSYCGQGAWILA), 292 to 312 (FTMHVVILATLAAIIASQALI), 343 to 363 (TYIPVINWFLFAITTSIVLLF), 373 to 393 (YGLAITITMLMTTILLSFFLI), 402 to 422 (VLLMMIFFGILEGIFFLASAV), and 424 to 444 (FMHGGYVVVIIAVAIIFIMTI).

This sequence belongs to the HAK/KUP transporter (TC 2.A.72) family.

The protein resides in the cell membrane. It catalyses the reaction K(+)(in) + H(+)(in) = K(+)(out) + H(+)(out). In terms of biological role, transport of potassium into the cell. Likely operates as a K(+):H(+) symporter. The chain is Probable potassium transport system protein Kup from Streptococcus agalactiae serotype Ia (strain ATCC 27591 / A909 / CDC SS700).